We begin with the raw amino-acid sequence, 239 residues long: Uridylate kinase (239 aa).

12–15 (KLSG) serves as a coordination point for ATP. The interval 20–25 (GEKGFG) is involved in allosteric activation by GTP. Position 54 (glycine 54) interacts with UMP. Residues glycine 55 and arginine 59 each contribute to the ATP site. UMP is bound by residues aspartate 72 and 133-140 (TGNPFFST). ATP is bound by residues tyrosine 166 and aspartate 169.

The protein belongs to the UMP kinase family. Homohexamer.

Its subcellular location is the cytoplasm. The catalysed reaction is UMP + ATP = UDP + ADP. It functions in the pathway pyrimidine metabolism; CTP biosynthesis via de novo pathway; UDP from UMP (UMPK route): step 1/1. Allosterically activated by GTP. Inhibited by UTP. Catalyzes the reversible phosphorylation of UMP to UDP. The polypeptide is Uridylate kinase (Caldicellulosiruptor saccharolyticus (strain ATCC 43494 / DSM 8903 / Tp8T 6331)).